Consider the following 79-residue polypeptide: Translational regulator CsrA (79 aa).

Belongs to the CsrA/RsmA family. Homodimer; the beta-strands of each monomer intercalate to form a hydrophobic core, while the alpha-helices form wings that extend away from the core.

It is found in the cytoplasm. A translational regulator that binds mRNA to regulate translation initiation and/or mRNA stability. Usually binds in the 5'-UTR at or near the Shine-Dalgarno sequence preventing ribosome-binding, thus repressing translation. Its main target seems to be the major flagellin gene, while its function is anatagonized by FliW. This is Translational regulator CsrA from Solidesulfovibrio magneticus (strain ATCC 700980 / DSM 13731 / RS-1) (Desulfovibrio magneticus).